The primary structure comprises 237 residues: Uridylate kinase (237 aa).

10–13 is a binding site for ATP; it reads KFSG. Positions 18–23 are involved in allosteric activation by GTP; that stretch reads GDSGFG. Residue glycine 52 participates in UMP binding. Residues glycine 53 and arginine 57 each coordinate ATP. Residues aspartate 73 and 134-141 each bind UMP; that span reads TGNPFFTT. ATP is bound by residues threonine 161, tyrosine 167, and aspartate 170.

It belongs to the UMP kinase family. In terms of assembly, homohexamer.

Its subcellular location is the cytoplasm. It carries out the reaction UMP + ATP = UDP + ADP. It participates in pyrimidine metabolism; CTP biosynthesis via de novo pathway; UDP from UMP (UMPK route): step 1/1. With respect to regulation, allosterically activated by GTP. Inhibited by UTP. Functionally, catalyzes the reversible phosphorylation of UMP to UDP. The polypeptide is Uridylate kinase (Campylobacter hominis (strain ATCC BAA-381 / DSM 21671 / CCUG 45161 / LMG 19568 / NCTC 13146 / CH001A)).